The chain runs to 196 residues: uncharacterized protein (196 aa).

This is an uncharacterized protein from Acanthamoeba polyphaga mimivirus (APMV).